We begin with the raw amino-acid sequence, 509 residues long: 2-isopropylmalate synthase (509 aa).

In terms of domain architecture, Pyruvate carboxyltransferase spans 5-267; sequence IQIFDTTLRD…QTALNLEETK (263 aa). Mn(2+)-binding residues include D14, H202, H204, and N238. A regulatory domain region spans residues 391–509; it reads KLETLQLQYV…AAENVEKVGN (119 aa).

It belongs to the alpha-IPM synthase/homocitrate synthase family. LeuA type 1 subfamily. In terms of assembly, homodimer. The cofactor is Mn(2+).

The protein localises to the cytoplasm. It carries out the reaction 3-methyl-2-oxobutanoate + acetyl-CoA + H2O = (2S)-2-isopropylmalate + CoA + H(+). It participates in amino-acid biosynthesis; L-leucine biosynthesis; L-leucine from 3-methyl-2-oxobutanoate: step 1/4. Catalyzes the condensation of the acetyl group of acetyl-CoA with 3-methyl-2-oxobutanoate (2-ketoisovalerate) to form 3-carboxy-3-hydroxy-4-methylpentanoate (2-isopropylmalate). The sequence is that of 2-isopropylmalate synthase from Staphylococcus aureus (strain USA300).